The following is a 267-amino-acid chain: Mitochondrial S-adenosylmethionine carrier protein (267 aa).

Solcar repeat units follow at residues 4 to 77 (REFT…TKSV), 86 to 168 (LAPI…LKAV), and 177 to 265 (LDSW…VRRT). 6 helical membrane passes run 5-25 (EFTA…LTLF), 49-69 (IYAG…AFFV), 85-105 (NLAP…ACLI), 142-162 (RGYG…FPLW), 182-202 (AAVC…PLDV), and 238-258 (FAGS…FLGA).

It belongs to the mitochondrial carrier (TC 2.A.29) family.

Its subcellular location is the mitochondrion inner membrane. The enzyme catalyses S-adenosyl-L-homocysteine(out) + S-adenosyl-L-methionine(in) = S-adenosyl-L-homocysteine(in) + S-adenosyl-L-methionine(out). Its function is as follows. Mitochondrial S-adenosyl-L-methionine/S-adenosyl-L-homocysteine antiporter. Mediates the exchange of cytosolic S-adenosyl-L-methionine, the predominant methyl-group donor for macromolecule methylation processes, for mitochondrial S-adenosylhomocysteine(SAH), a by-product of methylation reactions. This is Mitochondrial S-adenosylmethionine carrier protein (slc25a26) from Danio rerio (Zebrafish).